The primary structure comprises 607 residues: Elongation factor 4 (607 aa).

A tr-type G domain is found at 11-193; that stretch reads SKIRNFSIIA…QIVEKVPAPT (183 aa). GTP is bound by residues 23–28 and 140–143; these read DHGKST and NKID.

Belongs to the TRAFAC class translation factor GTPase superfamily. Classic translation factor GTPase family. LepA subfamily.

Its subcellular location is the cell membrane. It carries out the reaction GTP + H2O = GDP + phosphate + H(+). Required for accurate and efficient protein synthesis under certain stress conditions. May act as a fidelity factor of the translation reaction, by catalyzing a one-codon backward translocation of tRNAs on improperly translocated ribosomes. Back-translocation proceeds from a post-translocation (POST) complex to a pre-translocation (PRE) complex, thus giving elongation factor G a second chance to translocate the tRNAs correctly. Binds to ribosomes in a GTP-dependent manner. The sequence is that of Elongation factor 4 from Bacillus cereus (strain Q1).